Reading from the N-terminus, the 227-residue chain is MGDAGSERSKAPSLPPRCPCGFWGSSKTMNLCSKCFADFQKKQPDDDSTPSTSNSQSDLFSEETTSDNNNTSVTTPTLSPSQQSLPTELNVTSPSTEECGPCTDTAHVSLITPTKRSCGADSQSENEASPVKRPRLVENPERPEESGRSKQKSRRRCFQCQTKLELVQQELGSCRCGYVFCMLHRLPEQHDCTFDHMGRGREEAIMKMVKLDRKVGRSCQRIGEGCS.

The A20-type zinc finger occupies 12–44; sequence PSLPPRCPCGFWGSSKTMNLCSKCFADFQKKQP. Cys18, Cys20, Cys32, and Cys35 together coordinate Zn(2+). Disordered stretches follow at residues 41-99 and 113-151; these read KKQP…TEEC and PTKRSCGADSQSENEASPVKRPRLVENPERPEESGRSKQ. Low complexity-rich tracts occupy residues 49–59 and 66–77; these read TPSTSNSQSDL and SDNNNTSVTTPT. 2 stretches are compositionally biased toward polar residues: residues 78–96 and 113–127; these read LSPSQQSLPTELNVTSPST and PTKRSCGADSQSENE. The span at 135–148 shows a compositional bias: basic and acidic residues; sequence RLVENPERPEESGR. The AN1-type zinc finger occupies 151 to 200; that stretch reads QKSRRRCFQCQTKLELVQQELGSCRCGYVFCMLHRLPEQHDCTFDHMGRG. Zn(2+) contacts are provided by Cys157, Cys160, Cys174, Cys176, Cys181, His184, His190, and Cys192.

As to expression, expressed in testis.

This chain is AN1-type zinc finger protein 3 (Zfand3), found in Mus musculus (Mouse).